The primary structure comprises 160 residues: SsrA-binding protein (160 aa).

A disordered region spans residues 132–160 (KEFDKRDTVRERDSNRELQRTMRNKGKEE).

It belongs to the SmpB family.

The protein localises to the cytoplasm. Required for rescue of stalled ribosomes mediated by trans-translation. Binds to transfer-messenger RNA (tmRNA), required for stable association of tmRNA with ribosomes. tmRNA and SmpB together mimic tRNA shape, replacing the anticodon stem-loop with SmpB. tmRNA is encoded by the ssrA gene; the 2 termini fold to resemble tRNA(Ala) and it encodes a 'tag peptide', a short internal open reading frame. During trans-translation Ala-aminoacylated tmRNA acts like a tRNA, entering the A-site of stalled ribosomes, displacing the stalled mRNA. The ribosome then switches to translate the ORF on the tmRNA; the nascent peptide is terminated with the 'tag peptide' encoded by the tmRNA and targeted for degradation. The ribosome is freed to recommence translation, which seems to be the essential function of trans-translation. This Pseudomonas entomophila (strain L48) protein is SsrA-binding protein.